Here is a 148-residue protein sequence, read N- to C-terminus: Lysozyme C, milk isozyme (148 aa).

Residues 1–18 form the signal peptide; that stretch reads MKALLIVGLLLLSVAVQG. The region spanning 19–148 is the C-type lysozyme domain; the sequence is KKFQRCELAR…LRSYVQGCRV (130 aa). Cystine bridges form between C24/C146, C48/C134, C83/C99, and C95/C113. Catalysis depends on residues E53 and D71.

Belongs to the glycosyl hydrolase 22 family.

It carries out the reaction Hydrolysis of (1-&gt;4)-beta-linkages between N-acetylmuramic acid and N-acetyl-D-glucosamine residues in a peptidoglycan and between N-acetyl-D-glucosamine residues in chitodextrins.. Its function is as follows. Lysozymes have primarily a bacteriolytic function; those in tissues and body fluids are associated with the monocyte-macrophage system and enhance the activity of immunoagents. The polypeptide is Lysozyme C, milk isozyme (Bos taurus (Bovine)).